A 338-amino-acid chain; its full sequence is Tetraacyldisaccharide 4'-kinase (338 aa).

Residue 63–70 (TVGGAGKT) coordinates ATP.

It belongs to the LpxK family.

The enzyme catalyses a lipid A disaccharide + ATP = a lipid IVA + ADP + H(+). The protein operates within glycolipid biosynthesis; lipid IV(A) biosynthesis; lipid IV(A) from (3R)-3-hydroxytetradecanoyl-[acyl-carrier-protein] and UDP-N-acetyl-alpha-D-glucosamine: step 6/6. Its function is as follows. Transfers the gamma-phosphate of ATP to the 4'-position of a tetraacyldisaccharide 1-phosphate intermediate (termed DS-1-P) to form tetraacyldisaccharide 1,4'-bis-phosphate (lipid IVA). In Hahella chejuensis (strain KCTC 2396), this protein is Tetraacyldisaccharide 4'-kinase.